Here is a 962-residue protein sequence, read N- to C-terminus: Translation initiation factor IF-2 (962 aa).

The tract at residues 101–366 (AAQTQAAPVR…KKGKKLKLEP (266 aa)) is disordered. Residues 117 to 141 (DAAKARAEAATRAEARAKAEAEAAK) show a composition bias toward basic and acidic residues. Over residues 145–157 (AKAGNKAKPAAQK) the composition is skewed to low complexity. A compositionally biased stretch (basic and acidic residues) spans 173-216 (KPAEESKAEKAQADKMPSKKPAEPKEKAAKPKHERNGKGKDAKK). Low complexity predominate over residues 219–234 (KPAAPAVPQPVVSAEE). Residues 235-269 (QAQRDEEARRAAALRAHQEALLKEKQERQARREAM) are compositionally biased toward basic and acidic residues. The span at 270-283 (KQQAEQQAKAAQEA) shows a compositional bias: low complexity. The segment covering 338-354 (GGRDRNNARNGDDERVR) has biased composition (basic and acidic residues). The tr-type G domain occupies 462-631 (PRPPVVTVMG…LLEAEVLELT (170 aa)). The segment at 471-478 (GHVDHGKT) is G1. Position 471 to 478 (471 to 478 (GHVDHGKT)) interacts with GTP. Residues 496–500 (GITQH) are G2. Positions 517 to 520 (DTPG) are G3. GTP-binding positions include 517-521 (DTPGH) and 571-574 (NKID). The interval 571–574 (NKID) is G4. The segment at 607–609 (SAK) is G5.

Belongs to the TRAFAC class translation factor GTPase superfamily. Classic translation factor GTPase family. IF-2 subfamily.

It localises to the cytoplasm. In terms of biological role, one of the essential components for the initiation of protein synthesis. Protects formylmethionyl-tRNA from spontaneous hydrolysis and promotes its binding to the 30S ribosomal subunits. Also involved in the hydrolysis of GTP during the formation of the 70S ribosomal complex. The sequence is that of Translation initiation factor IF-2 from Neisseria meningitidis serogroup A / serotype 4A (strain DSM 15465 / Z2491).